We begin with the raw amino-acid sequence, 106 residues long: MPKANPTRKTKATRETGGRKKKDPNAPKRGLSAYMFFANDNRDKVREENPGISFGQVGKMLGEKWKSLSDKERKPYEDKAAADKKRYEDEKAAYKAGEAEEDEESS.

Over residues 1-11 (MPKANPTRKTK) the composition is skewed to basic residues. 2 disordered regions span residues 1-33 (MPKANPTRKTKATRETGGRKKKDPNAPKRGLSA) and 60-106 (MLGE…EESS). Composition is skewed to basic and acidic residues over residues 12–26 (ATRETGGRKKKDPNA) and 61–93 (LGEKWKSLSDKERKPYEDKAAADKKRYEDEKAA). Positions 27-95 (PKRGLSAYMF…RYEDEKAAYK (69 aa)) form a DNA-binding region, HMG box.

It belongs to the NHP6 family. Weakly associates with the stable spt16-pob3 heterodimer to form the FACT complex.

The protein localises to the nucleus. The protein resides in the chromosome. In terms of biological role, DNA-binding protein that induces severe bending of DNA. Required for DNA-binding by the FACT complex, a general chromatin factor that acts to reorganize nucleosomes. The FACT complex is involved in multiple processes that require DNA as a template such as mRNA elongation, DNA replication and DNA repair. Also augments the fidelity of transcription by RNA polymerase III independently of any role in the FACT complex. This Emericella nidulans (strain FGSC A4 / ATCC 38163 / CBS 112.46 / NRRL 194 / M139) (Aspergillus nidulans) protein is Non-histone chromosomal protein 6 (nhp6).